We begin with the raw amino-acid sequence, 197 residues long: MAVVPIRIVGDPVLHTATTPVTVAADGSLPADLAQLIATMYDTMDAANGVGLAANQIGCSLRLFVYDCAADRAMTARRRGVVINPVLETSEIPETMPDPDTDDEGCLSVPGESFPTGRAKWARVTGLDADGSPVSIEGTGLFARMLQHETGHLDGFLYLDRLIGRYARNAKRAVKSHGWGVPGLSWLPGEDPDPFGH.

2 residues coordinate Fe cation: Cys106 and His148. Glu149 is a catalytic residue. His152 lines the Fe cation pocket.

It belongs to the polypeptide deformylase family. Fe(2+) serves as cofactor.

It catalyses the reaction N-terminal N-formyl-L-methionyl-[peptide] + H2O = N-terminal L-methionyl-[peptide] + formate. In terms of biological role, removes the formyl group from the N-terminal Met of newly synthesized proteins. Requires at least a dipeptide for an efficient rate of reaction. N-terminal L-methionine is a prerequisite for activity but the enzyme has broad specificity at other positions. This is Peptide deformylase from Mycobacterium tuberculosis (strain ATCC 25177 / H37Ra).